Reading from the N-terminus, the 1127-residue chain is Myelin transcription factor 1 (1127 aa).

Disordered stretches follow at residues 1–157 (MSSE…KSSY) and 204–369 (MGVN…TDES). The CCHHC-type 1 zinc finger occupies 21–64 (PETTGADLSCPTPGCTGSGHVRGKYSRHRSLQSCPLAKKRKLED). The Zn(2+) site is built by cysteine 30, cysteine 35, histidine 48, and cysteine 54. A compositionally biased stretch (basic residues) spans 41-50 (VRGKYSRHRS). Basic and acidic residues-rich tracts occupy residues 61–71 (KLEDAETEHLV) and 82–103 (ALDE…KDVS). Over residues 104–117 (VSDESEGPLEEAEA) the composition is skewed to acidic residues. Low complexity predominate over residues 143–157 (SNPTSSPSGFSKSSY). The span at 244–259 (MVSEESSKQKGVLGHE) shows a compositional bias: basic and acidic residues. Residues 260–308 (EEGEEEEEDEEEEDEEEEEEGEEGEEEEEEEEEEEEEEDEEEEEEEEEA) show a composition bias toward acidic residues. Residues 348–360 (VRSDDDKDEDSRS) show a composition bias toward basic and acidic residues. 2 CCHHC-type zinc fingers span residues 435 to 478 (SRVE…PPEI) and 479 to 522 (LAMH…KLAK). Cysteine 444, cysteine 449, histidine 462, cysteine 468, cysteine 488, cysteine 493, histidine 506, and cysteine 512 together coordinate Zn(2+). Disordered regions lie at residues 520–542 (LAKS…SNSD) and 670–776 (TLDL…EERK). Positions 528-542 (QLQTGDPPKNNSNSD) are enriched in polar residues. Positions 703 to 725 (SQRQSSTSAPSSSMTSPQSSQAS) are enriched in low complexity. A compositionally biased stretch (basic and acidic residues) spans 726–735 (RQDEWDRPLD). The segment covering 761 to 772 (EADDQEVSEENF) has biased composition (acidic residues). CCHHC-type zinc fingers lie at residues 793-836 (KDIK…LRNL), 837-880 (MAAH…GLKV), 886-929 (DKED…QKEG), and 939-982 (KSLK…GKKG). 16 residues coordinate Zn(2+): cysteine 802, cysteine 807, histidine 820, cysteine 826, cysteine 846, cysteine 851, histidine 864, cysteine 870, cysteine 895, cysteine 900, histidine 913, cysteine 919, cysteine 948, cysteine 953, histidine 966, and cysteine 972.

This sequence belongs to the MYT1 family. As to quaternary structure, interacts with STEAP3. In terms of tissue distribution, isoform 1 is more predominant than isoform 2 at all stages of development and adulthood. Expressed in differentiated neurons especially at higher levels in newly generated ones.

It localises to the nucleus. Its function is as follows. Binds to the promoter region of genes encoding proteolipid proteins of the central nervous system. May play a role in the development of neurons and oligodendroglia in the CNS. May regulate a critical transition point in oligodendrocyte lineage development by modulating oligodendrocyte progenitor proliferation relative to terminal differentiation and up-regulation of myelin gene transcription. The chain is Myelin transcription factor 1 (Myt1) from Mus musculus (Mouse).